Here is a 793-residue protein sequence, read N- to C-terminus: Putative glutamate--cysteine ligase 2-3 (793 aa).

Positions 1–407 (MLASDPRKVG…RFWDRGDTAD (407 aa)) are carboxylate-amine ligase. Residues 367–390 (TEHLPDVEVPPPREPGPKSTGAGR) are disordered. Positions 408-793 (MTWTESTELD…ALTRLEDQSG (386 aa)) are peptidase M20.

The protein in the C-terminal section; belongs to the glutamate--cysteine ligase type 2 family. YbdK subfamily.

It catalyses the reaction L-cysteine + L-glutamate + ATP = gamma-L-glutamyl-L-cysteine + ADP + phosphate + H(+). Functionally, ATP-dependent carboxylate-amine ligase which exhibits weak glutamate--cysteine ligase activity. The protein is Putative glutamate--cysteine ligase 2-3 of Rhodococcus jostii (strain RHA1).